The sequence spans 488 residues: Aspartyl/glutamyl-tRNA(Asn/Gln) amidotransferase subunit B (488 aa).

Belongs to the GatB/GatE family. GatB subfamily. In terms of assembly, heterotrimer of A, B and C subunits.

The enzyme catalyses L-glutamyl-tRNA(Gln) + L-glutamine + ATP + H2O = L-glutaminyl-tRNA(Gln) + L-glutamate + ADP + phosphate + H(+). It carries out the reaction L-aspartyl-tRNA(Asn) + L-glutamine + ATP + H2O = L-asparaginyl-tRNA(Asn) + L-glutamate + ADP + phosphate + 2 H(+). Its function is as follows. Allows the formation of correctly charged Asn-tRNA(Asn) or Gln-tRNA(Gln) through the transamidation of misacylated Asp-tRNA(Asn) or Glu-tRNA(Gln) in organisms which lack either or both of asparaginyl-tRNA or glutaminyl-tRNA synthetases. The reaction takes place in the presence of glutamine and ATP through an activated phospho-Asp-tRNA(Asn) or phospho-Glu-tRNA(Gln). The chain is Aspartyl/glutamyl-tRNA(Asn/Gln) amidotransferase subunit B from Chlamydia trachomatis serovar A (strain ATCC VR-571B / DSM 19440 / HAR-13).